The following is a 267-amino-acid chain: NAD kinase 2 (267 aa).

Catalysis depends on D50, which acts as the Proton acceptor. NAD(+) is bound by residues D50–G51, K55, N122–E123, R149, D151, T162–S167, and A186.

Belongs to the NAD kinase family. It depends on a divalent metal cation as a cofactor.

The protein localises to the cytoplasm. It catalyses the reaction NAD(+) + ATP = ADP + NADP(+) + H(+). Its function is as follows. Involved in the regulation of the intracellular balance of NAD and NADP, and is a key enzyme in the biosynthesis of NADP. Catalyzes specifically the phosphorylation on 2'-hydroxyl of the adenosine moiety of NAD to yield NADP. This chain is NAD kinase 2, found in Listeria monocytogenes serovar 1/2a (strain ATCC BAA-679 / EGD-e).